The sequence spans 569 residues: DNA-binding protein eta2 (569 aa).

2 disordered regions span residues 1–26 (MMLA…TLSC) and 133–159 (KRKI…AKKR). Over residues 9-26 (INENQGTRSNLESPTLSC) the composition is skewed to polar residues. The residue at position 21 (Ser21) is a Phosphoserine. Myb-like domains lie at 322 to 371 (LDPK…RFVV) and 377 to 459 (ETID…EKTI). The disordered stretch occupies residues 459-487 (IASYSSNQRQEEDQGKKRKKRKKKKSKGK). Positions 474–487 (KKRKKRKKKKSKGK) are enriched in basic residues.

The protein localises to the nucleus. This chain is DNA-binding protein eta2 (eta2), found in Schizosaccharomyces pombe (strain 972 / ATCC 24843) (Fission yeast).